We begin with the raw amino-acid sequence, 762 residues long: Protein PHTF1 (762 aa).

The PHTF domain maps to 6 to 150 (RDAISWYQKK…VHCQIVSTQI (145 aa)). Helical transmembrane passes span 77–97 (GLVR…VTSL), 99–119 (IFVW…LYLM), and 121–141 (PIVN…MGTV). The interval 152–184 (RPSGNNGNRRRRKLRKTVNGDGSRENGNNSSDK) is disordered. N-linked (GlcNAc...) asparagine glycans are attached at residues N179 and N180. 5 positions are modified to phosphoserine: S272, S276, S277, S334, and S336. Disordered regions lie at residues 344 to 380 (SAAF…ETED) and 393 to 415 (RSSV…TKRD). The segment covering 348 to 361 (SQGSRSGVSGGSRS) has biased composition (low complexity). An N-linked (GlcNAc...) asparagine glycan is attached at N363. A compositionally biased stretch (basic and acidic residues) spans 365–376 (SRRDSESTRHDS). N431 carries N-linked (GlcNAc...) asparagine glycosylation. 4 helical membrane passes run 473–493 (GVGY…FPFL), 512–532 (EILT…LSII), 611–631 (VVVS…CAQV), and 645–665 (WEFL…ASLG). N-linked (GlcNAc...) asparagine glycans are attached at residues N674 and N733. The helical transmembrane segment at 737 to 757 (VVILSAVSGVISDLLGFNIRL) threads the bilayer.

Interacts with FEM1B. Widely expressed with highest levels in testis.

The protein resides in the endoplasmic reticulum membrane. It is found in the golgi apparatus. Its subcellular location is the cis-Golgi network membrane. The polypeptide is Protein PHTF1 (Homo sapiens (Human)).